Reading from the N-terminus, the 141-residue chain is Hemoglobin subunit alpha-1/2 (141 aa).

Residues 1–141 form the Globin domain; it reads VLSPADKTNV…VSTVLTSKYR (141 aa). Position 3 is a phosphoserine (serine 3). Residue lysine 7 is modified to N6-succinyllysine. The residue at position 8 (threonine 8) is a Phosphothreonine. At lysine 11 the chain carries N6-succinyllysine. At lysine 16 the chain carries N6-acetyllysine; alternate. Residue lysine 16 is modified to N6-succinyllysine; alternate. Position 24 is a phosphotyrosine (tyrosine 24). A Phosphoserine modification is found at serine 35. N6-succinyllysine is present on lysine 40. Residue serine 49 is modified to Phosphoserine. Residue histidine 58 participates in O2 binding. Residue histidine 87 coordinates heme b. Phosphoserine is present on serine 102. Residue threonine 108 is modified to Phosphothreonine. Serine 124 and serine 131 each carry phosphoserine. Phosphothreonine is present on residues threonine 134 and threonine 137. Residue serine 138 is modified to Phosphoserine.

Belongs to the globin family. In terms of assembly, heterotetramer of two alpha chains and two beta chains. In terms of tissue distribution, red blood cells.

Involved in oxygen transport from the lung to the various peripheral tissues. This chain is Hemoglobin subunit alpha-1/2, found in Macaca speciosa (Stump-tail macaque).